Consider the following 209-residue polypeptide: Hyperpolarization-activated voltage-gated potassium channel (209 aa).

Topologically, residues 1 to 10 are cytoplasmic; it reads MNLKDRRLKK. The helical transmembrane segment at 11 to 31 threads the bilayer; that stretch reads IMEVLSLIFTFEIVASFILST. Over 32 to 38 the chain is Extracellular; it reads YNPPYQD. The chain crosses the membrane as a helical span at residues 39 to 59; sequence LLIKLDYISIMFFTFEFIYNF. Topologically, residues 60 to 71 are cytoplasmic; it reads YYVEDKAKFFKD. A helical transmembrane segment spans residues 72–92; the sequence is IYNIVDAIVVIAFLLYSLQVF. Residues 93 to 96 are Extracellular-facing; sequence YSKA. The helical; Voltage-sensor transmembrane segment at 97-117 threads the bilayer; the sequence is FLGLRVINLLRILVLLRIIKL. At 118–125 the chain is on the cytoplasmic side; that stretch reads RKLEENQA. The helical transmembrane segment at 126 to 146 threads the bilayer; it reads LINFLTLLTICFIASCLIWIV. The Extracellular portion of the chain corresponds to 147–181; that stretch reads ESGVNPAINNFFDAFYFTTISITTVGYGDITPKTD. The Selectivity filter motif lies at 170 to 175; the sequence is TVGYGD. Residues 182–202 traverse the membrane as a helical segment; that stretch reads AGKLIIIFSVLFFISGLITSL. At 203-209 the chain is on the cytoplasmic side; that stretch reads QKALKGD.

This sequence belongs to the potassium channel family. Homotetramer.

The protein localises to the cell membrane. In terms of biological role, voltage-gated potassium-selective channel opened by hyperpolarization. This chain is Hyperpolarization-activated voltage-gated potassium channel (mvp), found in Methanocaldococcus jannaschii (strain ATCC 43067 / DSM 2661 / JAL-1 / JCM 10045 / NBRC 100440) (Methanococcus jannaschii).